Here is an 88-residue protein sequence, read N- to C-terminus: Protein MATERNALLY EXPRESSED GENE 2 (88 aa).

The signal sequence occupies residues 1–27 (MEYRKRVDALVFFSLLLLGYFAAHAHG). An intrachain disulfide couples cysteine 65 to cysteine 87.

Belongs to the MEG family. In terms of tissue distribution, expressed exclusively in endosperm.

The sequence is that of Protein MATERNALLY EXPRESSED GENE 2 (MEG2) from Zea mays (Maize).